The chain runs to 438 residues: Serine hydroxymethyltransferase (438 aa).

(6S)-5,6,7,8-tetrahydrofolate-binding positions include Leu-133 and 137-139; that span reads GHL. N6-(pyridoxal phosphate)lysine is present on Lys-242.

The protein belongs to the SHMT family. As to quaternary structure, homodimer. The cofactor is pyridoxal 5'-phosphate.

Its subcellular location is the cytoplasm. The catalysed reaction is (6R)-5,10-methylene-5,6,7,8-tetrahydrofolate + glycine + H2O = (6S)-5,6,7,8-tetrahydrofolate + L-serine. It functions in the pathway one-carbon metabolism; tetrahydrofolate interconversion. It participates in amino-acid biosynthesis; glycine biosynthesis; glycine from L-serine: step 1/1. In terms of biological role, catalyzes the reversible interconversion of serine and glycine with tetrahydrofolate (THF) serving as the one-carbon carrier. This reaction serves as the major source of one-carbon groups required for the biosynthesis of purines, thymidylate, methionine, and other important biomolecules. Also exhibits THF-independent aldolase activity toward beta-hydroxyamino acids, producing glycine and aldehydes, via a retro-aldol mechanism. The sequence is that of Serine hydroxymethyltransferase from Brucella suis (strain ATCC 23445 / NCTC 10510).